The chain runs to 499 residues: Potassium voltage-gated channel subfamily A member 2 (499 aa).

Residues Met1–Ala27 form a disordered region. The tetramerization domain stretch occupies residues Met1–Met125. Topologically, residues Met1–Gly160 are cytoplasmic. Residues Pro161–Leu182 traverse the membrane as a helical segment. Over Glu183–Pro221 the chain is Extracellular. N-linked (GlcNAc...) asparagine glycosylation occurs at Asn207. The helical transmembrane segment at Phe222 to Ala243 threads the bilayer. Cys244 carries the S-palmitoyl cysteine lipid modification. Residues Cys244–Ile254 lie on the Cytoplasmic side of the membrane. The helical transmembrane segment at Met255–Ala275 threads the bilayer. Topologically, residues Glu276–Ser289 are extracellular. Residues Leu290–His310 form a helical; Voltage-sensor membrane-spanning segment. Residues Ser311–Met325 are Cytoplasmic-facing. The interval Lys312–Met325 is S4-S5 linker. Residues Arg326–Tyr347 form a helical membrane-spanning segment. Topologically, residues Phe348–Ile361 are extracellular. Residues Pro362 to Thr373 constitute an intramembrane region (helical). The Selectivity filter signature appears at Thr374 to Asp379. An intramembrane segment occupies Thr374–Val381. Over Pro382–Lys388 the chain is Extracellular. The helical transmembrane segment at Ile389 to Tyr417 threads the bilayer. Residues His418–Val499 lie on the Cytoplasmic side of the membrane. Phosphotyrosine is present on Tyr429. Phosphoserine occurs at positions 434, 440, 441, and 449. Tyr458 carries the post-translational modification Phosphotyrosine. Ser468 is modified (phosphoserine). The short motif at Thr497 to Val499 is the PDZ-binding element.

It belongs to the potassium channel family. A (Shaker) (TC 1.A.1.2) subfamily. Kv1.2/KCNA2 sub-subfamily. As to quaternary structure, homotetramer and heterotetramer with other channel-forming alpha subunits, such as KCNA1, KCNA4, KCNA5, KCNA6 and KCNA7. Channel activity is regulated by interaction with the beta subunits, including KCNAB1 and KCNAB2. Identified in a complex with KCNA1 and KCNAB2. Identified in a complex with KCNA5 and KCNAB1. Interacts with the beta subunit KCNAB1. Identified in a complex with KCNA4 and FYN. Interacts with PTK2B. Interacts (via C-terminus) with CTTN. Interacts (via N-terminal cytoplasmic domain) with RHOA (GTP-bound form); this regulates channel activity by reducing location at the cell surface in response to CHRM1 activation. Interacts with DRD2. Interacts with SIGMAR1; cocaine consumption leads to increased interaction. Interacts with ADAM22. Interacts with CNTNAP2. Interacts (via C-terminus) with the PDZ domains of DLG1, DLG2 and DLG4. Interacts with ADAM11. Interacts with LYNX1. Phosphorylated on tyrosine residues; phosphorylation increases in response to ischemia. Phosphorylated on tyrosine residues by activated PTK2B/PYK2. Phosphorylation on tyrosine residues suppresses ion channel activity. Phosphorylated on tyrosine residues in response to CHRM1 activation; this abolishes interaction with CTTN. This is probably due to endocytosis of the phosphorylated channel subunits. Phosphorylated on serine residues in response to increased cAMP levels; phosphorylation is apparently not catalyzed by PKA. In terms of processing, N-glycosylated, with complex, sialylated N-glycans. As to expression, expressed in a wide variety of gastrointestinal smooth muscles. Not expressed in portal vein, renal artery, and uterus.

The protein resides in the cell membrane. The protein localises to the membrane. Its subcellular location is the cell projection. It localises to the axon. It is found in the synapse. The protein resides in the presynaptic cell membrane. The protein localises to the synaptosome. Its subcellular location is the endoplasmic reticulum membrane. It localises to the dendrite. It is found in the lamellipodium membrane. The protein resides in the cell junction. The protein localises to the paranodal septate junction. The catalysed reaction is K(+)(in) = K(+)(out). Inhibited by 4-aminopyridine (4-AP). Inhibited by dendrotoxin (DTX) and charybdotoxin (CTX), but not by tetraethylammonium (TEA). Inhibited by tityustoxin-K alpha (TsTX-Kalpha), a toxin that is highly specific for KCNA2. Inhibited by maurotoxin. Inhibited by kappaM conotoxins kappaM-RIIIJ and kappaM-RIIIK. Functionally, voltage-gated potassium channel that mediates transmembrane potassium transport in excitable membranes, primarily in the brain and the central nervous system, but also in the cardiovascular system. Prevents aberrant action potential firing and regulates neuronal output. Forms tetrameric potassium-selective channels through which potassium ions pass in accordance with their electrochemical gradient. The channel alternates between opened and closed conformations in response to the voltage difference across the membrane. Can form functional homotetrameric channels and heterotetrameric channels that contain variable proportions of KCNA1, KCNA2, KCNA4, KCNA5, KCNA6, KCNA7, and possibly other family members as well; channel properties depend on the type of alpha subunits that are part of the channel. Channel properties are modulated by cytoplasmic beta subunits that regulate the subcellular location of the alpha subunits and promote rapid inactivation of delayed rectifier potassium channels. In vivo, membranes probably contain a mixture of heteromeric potassium channel complexes, making it difficult to assign currents observed in intact tissues to any particular potassium channel family member. Homotetrameric KCNA2 forms a delayed-rectifier potassium channel that opens in response to membrane depolarization, followed by slow spontaneous channel closure. In contrast, a heteromultimer formed by KCNA2 and KCNA4 shows rapid inactivation. Regulates neuronal excitability and plays a role as pacemaker in the regulation of neuronal action potentials. KCNA2-containing channels play a presynaptic role and prevent hyperexcitability and aberrant action potential firing. Response to toxins that are selective for KCNA2-containing potassium channels suggests that in Purkinje cells, dendritic subthreshold KCNA2-containing potassium channels prevent random spontaneous calcium spikes, suppressing dendritic hyperexcitability without hindering the generation of somatic action potentials, and thereby play an important role in motor coordination. Plays a role in the induction of long-term potentiation of neuron excitability in the CA3 layer of the hippocampus. May function as down-stream effector for G protein-coupled receptors and inhibit GABAergic inputs to basolateral amygdala neurons. May contribute to the regulation of neurotransmitter release, such as gamma-aminobutyric acid (GABA). Contributes to the regulation of the axonal release of the neurotransmitter dopamine. Reduced KCNA2 expression plays a role in the perception of neuropathic pain after peripheral nerve injury, but not acute pain. Plays a role in the regulation of the time spent in non-rapid eye movement (NREM) sleep. The polypeptide is Potassium voltage-gated channel subfamily A member 2 (KCNA2) (Canis lupus familiaris (Dog)).